The sequence spans 217 residues: Probable GTP-binding protein EngB (217 aa).

The region spanning Glu27–Glu201 is the EngB-type G domain. GTP-binding positions include Gly35–Ser42, Gly62–Leu66, Asp80–Gly83, Thr147–Asp150, and Phe180–Ser182. Residues Ser42 and Thr64 each coordinate Mg(2+).

The protein belongs to the TRAFAC class TrmE-Era-EngA-EngB-Septin-like GTPase superfamily. EngB GTPase family. Mg(2+) is required as a cofactor.

Its function is as follows. Necessary for normal cell division and for the maintenance of normal septation. The sequence is that of Probable GTP-binding protein EngB from Yersinia enterocolitica serotype O:8 / biotype 1B (strain NCTC 13174 / 8081).